Reading from the N-terminus, the 444-residue chain is MAFSRFYLLTALYTGGILASSAYGIPSNYPEHHHRLIERLKKNSTQDSDSSPSESSPHPRQEPRRHVLTPVHNVLKDRPCDEGLSISKLLHSIEKETNSQISVDFTILPQWFYPKKAALATVDEKQPTWQFYISPNVSWQLYNSPTAGVGSIDFSYTLIRYWRNSAQNANNAAGIAGGINDYSSRTNTLSQLTFSQTFPGDILTVAMGQYSLYSIDGTLYDNDQQSGFISYALSQNASATYSLGSVGAYVQFTPTPSINIQAGFQDAYNIVGTSFDVYNLTKNKYNFYGYFSWAPQCKLGNGQYSALIYSTRKVPQQPTQTTGWSLNFGQHLGEKLYVFGRWNGATGTAINLNRSYVLGLASANPINRNSQDLLGAACSISKVNPKVVTEKRIRKYETVIETFATIGFGPHISLTPDLQIYIHPALRPDKRSAKVYGVRANFSA.

A signal peptide spans 1–19 (MAFSRFYLLTALYTGGILA). The interval 42-68 (KNSTQDSDSSPSESSPHPRQEPRRHVL) is disordered. A compositionally biased stretch (low complexity) spans 46–56 (QDSDSSPSESS).

This sequence belongs to the OprB family.

Its subcellular location is the cell outer membrane. In terms of biological role, facilitates L-arginine uptake, as part of the AaxABC system. The arginine uptake by the bacterium in the macrophage may be a virulence factor against the host innate immune response. This Chlamydia felis (strain Fe/C-56) (Chlamydophila felis) protein is Porin AaxA (aaxA).